Consider the following 286-residue polypeptide: tRNA (guanine-N(7)-)-methyltransferase (286 aa).

S-adenosyl-L-methionine-binding positions include Gly103, 126–127, 161–162, and Cys181; these read EI and NA. Asp184 is an active-site residue. Residue 259–261 coordinates S-adenosyl-L-methionine; the sequence is TEE.

The protein belongs to the class I-like SAM-binding methyltransferase superfamily. TrmB family. Forms a complex with TRM82.

The protein localises to the nucleus. It carries out the reaction guanosine(46) in tRNA + S-adenosyl-L-methionine = N(7)-methylguanosine(46) in tRNA + S-adenosyl-L-homocysteine. The protein operates within tRNA modification; N(7)-methylguanine-tRNA biosynthesis. Functionally, catalyzes the formation of N(7)-methylguanine at position 46 (m7G46) in tRNA. This is tRNA (guanine-N(7)-)-methyltransferase from Vanderwaltozyma polyspora (strain ATCC 22028 / DSM 70294 / BCRC 21397 / CBS 2163 / NBRC 10782 / NRRL Y-8283 / UCD 57-17) (Kluyveromyces polysporus).